The following is a 118-amino-acid chain: Non-specific lipid-transfer protein 5 (118 aa).

The N-terminal stretch at 1-25 is a signal peptide; it reads MEGLLKLSTLVIVCMLVTAPMASEA. Cystine bridges form between cysteine 29–cysteine 76, cysteine 39–cysteine 53, cysteine 54–cysteine 100, and cysteine 74–cysteine 114.

Belongs to the plant LTP family.

Plant non-specific lipid-transfer proteins transfer phospholipids as well as galactolipids across membranes. May play a role in wax or cutin deposition in the cell walls of expanding epidermal cells and certain secretory tissues. This chain is Non-specific lipid-transfer protein 5 (LTP5), found in Arabidopsis thaliana (Mouse-ear cress).